A 193-amino-acid polypeptide reads, in one-letter code: MEIEKDEDDTTLVDSGGDFDCNICLDQVRDPVVTLCGHLFCWPCIHKWTYASNNSRQRVDQYDHKREPPKCPVCKSDVSEATLVPIYGRGQKAPQSGSNVPSRPTGPVYDLRGVGQRLGEGESQRYMYRMPDPVMGVVCEMVYRRLFGESSSNMAPYRDMNVRSRRRAMQAEESLSRVYLFLLCFMFMCLFLF.

An RING-type zinc finger spans residues 21–75; that stretch reads CNICLDQVRDPVVTLCGHLFCWPCIHKWTYASNNSRQRVDQYDHKREPPKCPVCK. Residues 175–192 traverse the membrane as a helical; Anchor for type IV membrane protein segment; the sequence is LSRVYLFLLCFMFMCLFL.

As to quaternary structure, interacts with ERABP1. Barely detected in roots and limited to the root tips. Expressed in leaf hydathodes and in siliques.

The protein resides in the endoplasmic reticulum membrane. The enzyme catalyses S-ubiquitinyl-[E2 ubiquitin-conjugating enzyme]-L-cysteine + [acceptor protein]-L-lysine = [E2 ubiquitin-conjugating enzyme]-L-cysteine + N(6)-ubiquitinyl-[acceptor protein]-L-lysine.. The protein operates within protein modification; protein ubiquitination. Its function is as follows. E3 ubiquitin-protein ligase that promotes the ubiquitination and proteasomal degradation of the auxin-binding protein ERABP1. The chain is E3 ubiquitin-protein ligase RMA2 (RMA2) from Arabidopsis thaliana (Mouse-ear cress).